The following is a 211-amino-acid chain: Large ribosomal subunit protein bL9 (211 aa).

The disordered stretch occupies residues 180 to 211; that stretch reads DDIGAAGMDDDDDDAPAPAQADPSSEESSEED.

Belongs to the bacterial ribosomal protein bL9 family.

Functionally, binds to the 23S rRNA. This is Large ribosomal subunit protein bL9 from Jannaschia sp. (strain CCS1).